A 183-amino-acid chain; its full sequence is Endoribonuclease YbeY (183 aa).

Residues H143, H147, and H153 each coordinate Zn(2+).

Belongs to the endoribonuclease YbeY family. It depends on Zn(2+) as a cofactor.

Its subcellular location is the cytoplasm. Functionally, single strand-specific metallo-endoribonuclease involved in late-stage 70S ribosome quality control and in maturation of the 3' terminus of the 16S rRNA. This Rickettsia bellii (strain OSU 85-389) protein is Endoribonuclease YbeY.